Here is a 1016-residue protein sequence, read N- to C-terminus: S-layer protein A (1016 aa).

Positions 1–30 (MDLSTKKVISAGLVFIYALSLAMLVPMFLA) are cleaved as a signal peptide.

This sequence belongs to the Sulfolobales SlaA family. In terms of assembly, the mushroom-shaped unit cells of the Sulfolobales' S-layers may consist of three SlaB subunits and six SlaA subunits.

The protein resides in the secreted. Its subcellular location is the cell wall. It is found in the S-layer. Its function is as follows. S-layer large protein. May form the highly ordered outer sheath. The polypeptide is S-layer protein A (Acidianus ambivalens (Desulfurolobus ambivalens)).